A 1041-amino-acid polypeptide reads, in one-letter code: Pre-mRNA-splicing factor ATP-dependent RNA helicase DHX16 (1041 aa).

Disordered stretches follow at residues 101 to 207 (EDSE…AYEE) and 371 to 391 (LQGD…QKES). Residues S103, S106, and S107 each carry the phosphoserine modification. A compositionally biased stretch (basic residues) spans 119–130 (QKKRKKRKHLRK). The residue at position 160 (S160) is a Phosphoserine. Basic and acidic residues predominate over residues 166–207 (RTERERLQDLEERDAFAERVRQRDKDRTRNVLERSDKKAYEE). Polar residues predominate over residues 381-391 (PTSTQAQQKES). In terms of domain architecture, Helicase ATP-binding spans 409–573 (LAAIANHQVL…FDDAPVFRIP (165 aa)). Residue 422 to 429 (GETGSGKT) coordinates ATP. A DEAH box motif is present at residues 520–523 (DEAH). Residues 598–771 (SVLQIHVTQP…NVVLLLKSLG (174 aa)) form the Helicase C-terminal domain. T712 bears the Phosphothreonine mark.

This sequence belongs to the DEAD box helicase family. DEAH subfamily. DDX16/PRP8 sub-subfamily. Component of pre-catalytic spliceosome complexes. Component of the minor spliceosome, which splices U12-type introns. Interacts with GPKOW. Interacts with TRIM6. Interacts with RIGI. As to expression, expressed in the spleen, thyroid and testis. Also expressed in the brain and cerebellum.

The protein resides in the nucleus. The protein localises to the nucleoplasm. Its subcellular location is the cytoplasm. The enzyme catalyses ATP + H2O = ADP + phosphate + H(+). Required for pre-mRNA splicing as a component of the spliceosome. Contributes to pre-mRNA splicing after spliceosome formation and prior to the first transesterification reaction. As a component of the minor spliceosome, involved in the splicing of U12-type introns in pre-mRNAs. Also plays a role in innate antiviral response by acting as a pattern recognition receptor sensing splicing signals in viral RNA. Mechanistically, TRIM6 promotes the interaction between unanchored 'Lys-48'-polyubiquitin chains and DHX16, leading to DHX16 interaction with RIGI and ssRNA to amplify RIGI-dependent innate antiviral immune responses. This chain is Pre-mRNA-splicing factor ATP-dependent RNA helicase DHX16 (DHX16), found in Homo sapiens (Human).